Reading from the N-terminus, the 292-residue chain is Homoserine kinase (292 aa).

84–94 (PLARGMGSSSA) lines the ATP pocket.

The protein belongs to the GHMP kinase family. Homoserine kinase subfamily.

It is found in the cytoplasm. The catalysed reaction is L-homoserine + ATP = O-phospho-L-homoserine + ADP + H(+). It functions in the pathway amino-acid biosynthesis; L-threonine biosynthesis; L-threonine from L-aspartate: step 4/5. In terms of biological role, catalyzes the ATP-dependent phosphorylation of L-homoserine to L-homoserine phosphate. This chain is Homoserine kinase, found in Campylobacter lari (strain RM2100 / D67 / ATCC BAA-1060).